The sequence spans 642 residues: Threonine--tRNA ligase (642 aa).

The 61-residue stretch at 1-61 folds into the TGS domain; sequence MPVITLPDGS…ETDAELSIIT (61 aa). A catalytic region spans residues 243 to 534; the sequence is DHRKIGKQLD…LIEEYAGRFP (292 aa). Positions 334, 385, and 511 each coordinate Zn(2+).

The protein belongs to the class-II aminoacyl-tRNA synthetase family. Homodimer. It depends on Zn(2+) as a cofactor.

It is found in the cytoplasm. It catalyses the reaction tRNA(Thr) + L-threonine + ATP = L-threonyl-tRNA(Thr) + AMP + diphosphate + H(+). Functionally, catalyzes the attachment of threonine to tRNA(Thr) in a two-step reaction: L-threonine is first activated by ATP to form Thr-AMP and then transferred to the acceptor end of tRNA(Thr). Also edits incorrectly charged L-seryl-tRNA(Thr). The sequence is that of Threonine--tRNA ligase from Shewanella baltica (strain OS195).